The chain runs to 562 residues: uncharacterized protein (562 aa).

Helical transmembrane passes span 4 to 26, 33 to 55, 59 to 78, 90 to 112, and 159 to 181; these read VRWIISTAPEIFLLLAVAIGTML, GFAIGTTACILIVSVLIGQLGTF, ALLRIVLFSLFVFTIGYKSG, LAQVAMALVLGGTGLVIVLAFAF, and IAAGYAVTYVLGYILTLLYVPFA. 2 RCK C-terminal domains span residues 207-287 and 295-375; these read PKTE…IIGT and LKAI…QVGQ. 6 consecutive transmembrane segments (helical) span residues 385-402, 406-428, 449-471, 476-498, 505-524, and 539-561; these read IAFLAAGIAAGLLAGLVS, GGIALTLGGGGGALIAGLLCGWL, LGLGGFIAAIGLANGHAAWVAIQ, LLVGMGLVVTLVPLVVATLFAYH, VITCGALAGAMTVDAAVTGA, and VPYAVGNVVLTVLGPIIVACTFV.

This sequence belongs to the AAE transporter (TC 2.A.81) family.

The protein resides in the cell membrane. This is an uncharacterized protein from Bradyrhizobium diazoefficiens (strain JCM 10833 / BCRC 13528 / IAM 13628 / NBRC 14792 / USDA 110).